The sequence spans 415 residues: Fructose-1,6-bisphosphatase, chloroplastic (415 aa).

The transit peptide at M1–M57 directs the protein to the chloroplast. Mg(2+)-binding residues include E135, E164, D185, L187, and D188. Position 188 to 191 (D188 to S191) interacts with substrate. The segment at S207–V232 is involved in light regulation. A disulfide bridge connects residues C231 and C236. Positions 295, 327, 345, 347, and 357 each coordinate substrate. Position 363 (E363) interacts with Mg(2+).

The protein belongs to the FBPase class 1 family. Homotetramer. Requires Mg(2+) as cofactor.

Its subcellular location is the plastid. The protein localises to the chloroplast. The enzyme catalyses beta-D-fructose 1,6-bisphosphate + H2O = beta-D-fructose 6-phosphate + phosphate. Its pathway is carbohydrate biosynthesis; Calvin cycle. The protein is Fructose-1,6-bisphosphatase, chloroplastic of Spinacia oleracea (Spinach).